A 280-amino-acid polypeptide reads, in one-letter code: Four and a half LIM domains protein 3 (280 aa).

The residue at position 2 (S2) is an N-acetylserine. Residues 7–31 form a C4-type zinc finger; sequence CAKCNESLYGRKYIQTDSGPYCVPC. LIM zinc-binding domains lie at 40–92 and 101–153; these read CAEC…CNDC and CSAC…CVPC. Residue K157 is modified to N6-acetyllysine. LIM zinc-binding domains are found at residues 162–212 and 221–275; these read CARC…CVAC and CSSC…CQGC. K235 is subject to N6-acetyllysine.

Interacts with SOX15; the interaction recruits FHL3 to FOXK1 promoters where it acts as a transcriptional coactivator of FOXK1. As to expression, expressed only in skeletal muscle.

It localises to the nucleus. The protein localises to the cytoplasm. In terms of biological role, recruited by SOX15 to FOXK1 promoters where it acts as a transcriptional coactivator of FOXK1. This chain is Four and a half LIM domains protein 3 (FHL3), found in Homo sapiens (Human).